A 396-amino-acid chain; its full sequence is Elongation factor Tu 1 (396 aa).

The region spanning 10–206 (KPHINVGTIG…AMDAHIPQPE (197 aa)) is the tr-type G domain. A G1 region spans residues 19-26 (GHVDHGKT). 19 to 26 (GHVDHGKT) serves as a coordination point for GTP. Residue Thr26 coordinates Mg(2+). Residues 60–64 (GITIA) form a G2 region. The G3 stretch occupies residues 81–84 (DCPG). Residues 81–85 (DCPGH) and 136–139 (NKAD) each bind GTP. A G4 region spans residues 136–139 (NKAD). A G5 region spans residues 174 to 176 (SAL).

This sequence belongs to the TRAFAC class translation factor GTPase superfamily. Classic translation factor GTPase family. EF-Tu/EF-1A subfamily. As to quaternary structure, monomer.

The protein localises to the cytoplasm. It catalyses the reaction GTP + H2O = GDP + phosphate + H(+). In terms of biological role, GTP hydrolase that promotes the GTP-dependent binding of aminoacyl-tRNA to the A-site of ribosomes during protein biosynthesis. The sequence is that of Elongation factor Tu 1 from Halorhodospira halophila (strain DSM 244 / SL1) (Ectothiorhodospira halophila (strain DSM 244 / SL1)).